The chain runs to 107 residues: Nucleoid-associated protein GbCGDNIH1_0260 (107 aa).

This sequence belongs to the YbaB/EbfC family. In terms of assembly, homodimer.

It localises to the cytoplasm. It is found in the nucleoid. Its function is as follows. Binds to DNA and alters its conformation. May be involved in regulation of gene expression, nucleoid organization and DNA protection. This is Nucleoid-associated protein GbCGDNIH1_0260 from Granulibacter bethesdensis (strain ATCC BAA-1260 / CGDNIH1).